The sequence spans 365 residues: MASSSNIKHRLWLDGCMDFFHYGHSNAILQAKQLGETLVIGIHSDEEITLNKGPPVMTLEERCLSANTCKWVDEVVPSAPYVFDLEWMRRYGCQYVVHGDDISTDANGDDCYRFAKAADQYLEVKRTEGVSTTELLDRLLSSVPLEIYSTPVSVLSSQIDLLRRFATDSDGLTPFTDVFIYNTEKPETLISGTTLLRLNPEKNIIYIDGDWDLFTEKHISALELCTRMFPGIPIMAGIFADEKCFEKPMLNLLERILNLLQCKYISSILVGPPPASLFASSKYIKLCFDEQISKVYYPIFSTDVSIPALDISLSNTPNNSFYKFDKLGSDLIKQRVMLRRQHYEERQRRKMGKNATEQTTIKTYA.

The interval 344 to 365 is disordered; it reads EERQRRKMGKNATEQTTIKTYA. Residues 355-365 are compositionally biased toward polar residues; sequence ATEQTTIKTYA.

The protein belongs to the cytidylyltransferase family.

It catalyses the reaction phosphoethanolamine + CTP + H(+) = CDP-ethanolamine + diphosphate. It participates in phospholipid metabolism; phosphatidylethanolamine biosynthesis; phosphatidylethanolamine from ethanolamine: step 2/3. The sequence is that of Probable ethanolamine-phosphate cytidylyltransferase from Schizosaccharomyces pombe (strain 972 / ATCC 24843) (Fission yeast).